An 89-amino-acid polypeptide reads, in one-letter code: MALLDFFLSRKKSTANIAKERLQIIVAERRRGDNEPHYLPQLKRDLLEVISKYVQIDPEMLSVQLEKKDGDISILELNVTLPETEETTK.

This sequence belongs to the MinE family.

Functionally, prevents the cell division inhibition by proteins MinC and MinD at internal division sites while permitting inhibition at polar sites. This ensures cell division at the proper site by restricting the formation of a division septum at the midpoint of the long axis of the cell. The polypeptide is Cell division topological specificity factor (Sodalis glossinidius (strain morsitans)).